The chain runs to 155 residues: Small ribosomal subunit protein uS7c (155 aa).

The protein belongs to the universal ribosomal protein uS7 family. As to quaternary structure, part of the 30S ribosomal subunit.

It localises to the plastid. Its subcellular location is the chloroplast. Functionally, one of the primary rRNA binding proteins, it binds directly to 16S rRNA where it nucleates assembly of the head domain of the 30S subunit. The protein is Small ribosomal subunit protein uS7c (rps7) of Canella winterana (Wild cinnamon).